A 593-amino-acid chain; its full sequence is Chaperone protein DnaK (593 aa).

Thr-181 is modified (phosphothreonine; by autocatalysis).

It belongs to the heat shock protein 70 family.

Its function is as follows. Acts as a chaperone. The chain is Chaperone protein DnaK from Mycoplasmoides gallisepticum (strain R(low / passage 15 / clone 2)) (Mycoplasma gallisepticum).